Consider the following 144-residue polypeptide: uncharacterized protein (144 aa).

A helical transmembrane segment spans residues 25–47 (LTLLDGCCVALVLALTAWSGFFV).

The protein localises to the membrane. This is an uncharacterized protein from Treponema pallidum (strain Nichols).